A 149-amino-acid polypeptide reads, in one-letter code: Large ribosomal subunit protein uL13 (149 aa).

Belongs to the universal ribosomal protein uL13 family. Part of the 50S ribosomal subunit.

Functionally, this protein is one of the early assembly proteins of the 50S ribosomal subunit, although it is not seen to bind rRNA by itself. It is important during the early stages of 50S assembly. This is Large ribosomal subunit protein uL13 from Gemmatimonas aurantiaca (strain DSM 14586 / JCM 11422 / NBRC 100505 / T-27).